We begin with the raw amino-acid sequence, 590 residues long: uncharacterized protein (590 aa).

The interval 330–368 (IDKSESDIDDSESDIDSENDIDSESDIDDSETDDEEELE) is disordered. Positions 336–368 (DIDDSESDIDSENDIDSESDIDDSETDDEEELE) are enriched in acidic residues.

The protein belongs to the mimivirus L5 family.

This is an uncharacterized protein from Acanthamoeba polyphaga mimivirus (APMV).